The chain runs to 597 residues: tRNA uridine 5-carboxymethylaminomethyl modification enzyme MnmG (597 aa).

An FAD-binding site is contributed by 10–15 (GGGHAG). 267-281 (GPRYCPSIEDKVVRF) contacts NAD(+).

The protein belongs to the MnmG family. In terms of assembly, homodimer. Heterotetramer of two MnmE and two MnmG subunits. It depends on FAD as a cofactor.

It is found in the cytoplasm. Functionally, NAD-binding protein involved in the addition of a carboxymethylaminomethyl (cmnm) group at the wobble position (U34) of certain tRNAs, forming tRNA-cmnm(5)s(2)U34. This Thermus thermophilus (strain ATCC 27634 / DSM 579 / HB8) protein is tRNA uridine 5-carboxymethylaminomethyl modification enzyme MnmG.